Here is a 1271-residue protein sequence, read N- to C-terminus: Probable WRKY transcription factor protein 1 (1271 aa).

Positions 1-12 (MGAQYSTELNKY) are enriched in polar residues. 3 disordered regions span residues 1–138 (MGAQ…NSDR), 204–312 (NNNN…QQNG), and 370–515 (NNNN…RTNS). The stretch at 9–71 (LNKYNNNNNN…NNNNNNNNNN (63 aa)) forms a coiled coil. Composition is skewed to low complexity over residues 13-103 (NNNN…NNNN), 116-135 (INNT…NNNN), 204-216 (NNNN…NENN), and 223-259 (SSTT…NNNN). Residues 260-274 (NEDDEDDYGDDDTIE) are compositionally biased toward acidic residues. Residues 297 to 312 (SNLNDTNGGNSPQQNG) are compositionally biased toward polar residues. Residues 320–372 (KKLLALQQKQLEQEQEQKQQQKQQQQQQQQQQQQQQQQQQQQQKDAIENINNN) adopt a coiled-coil conformation. The span at 370 to 388 (NNNNNNKLQPIVKNSVNKT) shows a compositional bias: low complexity. Positions 413-442 (NEDEYDASDEYIDDDDDDDEKYDDDDDEYF) are enriched in acidic residues. Positions 443 to 458 (EGNNNNNYKKNNISNK) are enriched in low complexity. Positions 475–487 (EIFKQKKLNHDKN) are enriched in basic and acidic residues. Residues 488 to 515 (QSNPKQQLTSHSEFDNSLLNKNQSRTNS) show a composition bias toward polar residues. The stretch at 520–574 (LQIKEENYHQIQQEHGEKQQQQQQQQQQPQQQQQQQQQQQQQQQQEMQVDKEQTE) forms a coiled coil. Residues 578-587 (NTNKKEEQKP) show a composition bias toward basic and acidic residues. 2 disordered regions span residues 578-650 (NTNK…EGFL) and 667-811 (SKKS…NISN). The segment covering 610 to 642 (NNENNNNNNNNNNNNNNNNNNNNNNNNNNYRNN) has biased composition (low complexity). Over residues 672–702 (NVVPTSPKSNLSDQQPPFSPVQISPQKQSPA) the composition is skewed to polar residues. 3 stretches are compositionally biased toward low complexity: residues 703–715 (TTTT…TPTP), 725–766 (NNNI…NNIN), and 774–811 (NSTQ…NISN). The stretch at 766-786 (NNEEDEENNSTQNNNNNNNNN) forms a coiled coil. Positions 808–872 (NISNIVSDGY…YKGEHCHGFP (65 aa)) form a DNA-binding region, WRKY 1. 4 residues coordinate Zn(2+): C839, C844, H867, and H869. A disordered region spans residues 890 to 1095 (FEGLDGNNNN…RFNGTSESKG (206 aa)). A compositionally biased stretch (low complexity) spans 895–918 (GNNNNNNNNNNNNNNYSSNSNSNG). A compositionally biased stretch (gly residues) spans 919–937 (NGNGNGNGNGNGNGNGNGN). Low complexity predominate over residues 938-956 (SNGNQDQNGNSFNDQNGDS). Polar residues predominate over residues 957–966 (PTQHGQISPM). Positions 967 to 995 (NSPKNTIPTTTTTTTSISTYVNTNSTNKK) are enriched in low complexity. Basic and acidic residues predominate over residues 998-1010 (SKQEKKISVKNET). Residues 1011–1021 (TDDDEFQEDID) show a composition bias toward acidic residues. Positions 1013-1040 (DDEFQEDIDQLSNNNNNNNNNNNNNNNN) form a coiled coil. The segment covering 1025–1085 (NNNNNNNNNN…NNNNNNNNNN (61 aa)) has biased composition (low complexity). The segment at residues 1105–1167 (SSIDHLDDGF…YRGKHNHDPP (63 aa)) is a DNA-binding region (WRKY 2). Positions 1136, 1141, 1162, and 1164 each coordinate Zn(2+). Positions 1180–1210 (NGLYNNNNNNNNNNNNNNNNNNNNNNINNIN) are disordered. Residues 1184-1210 (NNNNNNNNNNNNNNNNNNNNNNINNIN) are compositionally biased toward low complexity.

Belongs to the WRKY group I family.

The protein localises to the nucleus. Probable transcription factor. Interacts specifically with the W box (5'-(T)TGAC[CT]-3'), a frequently occurring elicitor-responsive cis-acting element. This Dictyostelium discoideum (Social amoeba) protein is Probable WRKY transcription factor protein 1 (wrky1).